Reading from the N-terminus, the 90-residue chain is DNA/RNA-binding protein Alba (90 aa).

Residue lysine 11 is modified to N6-acetyllysine.

The protein belongs to the histone-like Alba family. Acetylated. Acetylation at Lys-11 decreases DNA-binding affinity.

Its subcellular location is the cytoplasm. The protein resides in the chromosome. In terms of biological role, binds double-stranded DNA tightly but without sequence specificity. Involved in DNA compaction. This Picrophilus torridus (strain ATCC 700027 / DSM 9790 / JCM 10055 / NBRC 100828 / KAW 2/3) protein is DNA/RNA-binding protein Alba.